Consider the following 411-residue polypeptide: Lissencephaly-1 homolog (411 aa).

The LisH domain occupies 9-41 (QREELNQAIADYLGSNGYSSALEAFRKEADISG). Positions 56 to 83 (TSVIRLQKKVMELEAKLSEAEKEVIEGA) form a coiled coil. WD repeat units follow at residues 106–147 (GHRA…RSLK), 149–187 (HTSSVQDIAFDSQGKLLASCSADLSIKLWDFQQSYDCVK), 191–230 (GHDHNVSSVAFVPAGDYVLSASRDQTIKMWEVATGYCVKT), 233–272 (GHREWIRMVRVHMDGNIFASCSIDHSIRIWSINSRDCKAE), 275–334 (AHDH…CLFV), 337–376 (GHDNWVRELTFHPGGKYLVSASDDKTIRVWDLRNKRFMKT), and 379–411 (AHQHFCTSVDFHKKLPYVISGSVDNTVKVWECR).

The protein belongs to the WD repeat LIS1/nudF family.

Its subcellular location is the cytoplasm. The protein localises to the cytoskeleton. It localises to the microtubule organizing center. It is found in the centrosome. Positively regulates the activity of the minus-end directed microtubule motor protein dynein. May enhance dynein-mediated microtubule sliding by targeting dynein to the microtubule plus end. Required for several dynein- and microtubule-dependent processes. This chain is Lissencephaly-1 homolog, found in Glossina morsitans morsitans (Savannah tsetse fly).